We begin with the raw amino-acid sequence, 341 residues long: TERF1-interacting nuclear factor 2 (341 aa).

N-acetylalanine is present on A2. The short motif at H243–C265 is the TBM element. Residues P249 to S255 carry the Nuclear localization signal motif. The interval P283–V341 is disordered.

Monomer. Found in a complex with POT1; TERF1 and TNKS1. Component of the shelterin complex (telosome) composed of TERF1, TERF2, TINF2, TERF2IP, ACD and POT1. Interacts with TERF1.

Its subcellular location is the nucleus. It localises to the chromosome. It is found in the telomere. Functionally, component of the shelterin complex (telosome) that is involved in the regulation of telomere length and protection. Shelterin associates with arrays of double-stranded TTAGGG repeats added by telomerase and protects chromosome ends; without its protective activity, telomeres are no longer hidden from the DNA damage surveillance and chromosome ends are inappropriately processed by DNA repair pathways. Plays a role in shelterin complex assembly. The chain is TERF1-interacting nuclear factor 2 (Tinf2) from Mus musculus (Mouse).